Reading from the N-terminus, the 425-residue chain is 3-deoxy-D-manno-octulosonic acid transferase (425 aa).

The helical; Signal-anchor transmembrane segment at 3–23 threads the bilayer; the sequence is ELLYTALLYLIQPLIWIRLWV. Glutamate 60 serves as the catalytic Proton acceptor. Residues 268 to 269, 309 to 311, and 335 to 338 contribute to the CMP site; these read PR, MGE, and NPLE.

It belongs to the glycosyltransferase group 1 family. Glycosyltransferase 30 subfamily.

The protein localises to the cell inner membrane. It carries out the reaction lipid IVA (E. coli) + CMP-3-deoxy-beta-D-manno-octulosonate = alpha-Kdo-(2-&gt;6)-lipid IVA (E. coli) + CMP + H(+). It catalyses the reaction alpha-Kdo-(2-&gt;6)-lipid IVA (E. coli) + CMP-3-deoxy-beta-D-manno-octulosonate = alpha-Kdo-(2-&gt;4)-alpha-Kdo-(2-&gt;6)-lipid IVA (E. coli) + CMP + H(+). It participates in glycolipid biosynthesis; KDO(2)-lipid A biosynthesis; KDO(2)-lipid A from CMP-3-deoxy-D-manno-octulosonate and lipid IV(A): step 1/4. It functions in the pathway glycolipid biosynthesis; KDO(2)-lipid A biosynthesis; KDO(2)-lipid A from CMP-3-deoxy-D-manno-octulosonate and lipid IV(A): step 2/4. The protein operates within bacterial outer membrane biogenesis; LPS core biosynthesis. Functionally, involved in lipopolysaccharide (LPS) biosynthesis. Catalyzes the transfer of two 3-deoxy-D-manno-octulosonate (Kdo) residues from CMP-Kdo to lipid IV(A), the tetraacyldisaccharide-1,4'-bisphosphate precursor of lipid A. The sequence is that of 3-deoxy-D-manno-octulosonic acid transferase (waaA) from Escherichia coli O157:H7.